A 39-amino-acid polypeptide reads, in one-letter code: Cytochrome b559 subunit beta (39 aa).

A helical transmembrane segment spans residues 14-30 (WLAIHGLAVPTVSFLGS). A heme-binding site is contributed by histidine 18.

It belongs to the PsbE/PsbF family. Heterodimer of an alpha subunit and a beta subunit. PSII is composed of 1 copy each of membrane proteins PsbA, PsbB, PsbC, PsbD, PsbE, PsbF, PsbH, PsbI, PsbJ, PsbK, PsbL, PsbM, PsbT, PsbX, PsbY, PsbZ, Psb30/Ycf12, at least 3 peripheral proteins of the oxygen-evolving complex and a large number of cofactors. It forms dimeric complexes. Heme b is required as a cofactor.

It is found in the plastid. It localises to the chloroplast thylakoid membrane. Functionally, this b-type cytochrome is tightly associated with the reaction center of photosystem II (PSII). PSII is a light-driven water:plastoquinone oxidoreductase that uses light energy to abstract electrons from H(2)O, generating O(2) and a proton gradient subsequently used for ATP formation. It consists of a core antenna complex that captures photons, and an electron transfer chain that converts photonic excitation into a charge separation. This is Cytochrome b559 subunit beta from Allium textile (Textile onion).